The sequence spans 350 residues: MEMTFRWYGKDDPVKLEYIKQIPGMKGIVTAIYDIPVGEVWPLERILELKKEIESHGLKLSVIESVPVHEDIKLGLPTRDRYIDNYIQTIRNLAEAGVDTICYNFMPVFDWTRSDLNYKLEDGSTCLIYDEEQVKKMDPALGELELPGWDTSYGEGGLKGLLEQYKDIDEEILWSNLNYFIQRIMKVADKVRMKMAIHPDDPPWGIFGLPRIITNFDNLKRFIDLYDSPYHGITLCTGSLGCTKVNDMVQMINYFGKERNRIHFAHLRNVKITGDSSFNEVAHLSEAGSLDFYEIVKAYCDYDFAGPYRPDHGRMIWGETGRPGYGLYDRALGAVYINGLIEAIKKNKKN.

This sequence belongs to the mannonate dehydratase family. Fe(2+) serves as cofactor. Requires Mn(2+) as cofactor.

It carries out the reaction D-mannonate = 2-dehydro-3-deoxy-D-gluconate + H2O. It participates in carbohydrate metabolism; pentose and glucuronate interconversion. Functionally, catalyzes the dehydration of D-mannonate. The chain is Mannonate dehydratase from Clostridium perfringens (strain 13 / Type A).